Reading from the N-terminus, the 185-residue chain is Elongation factor P (185 aa).

Belongs to the elongation factor P family.

It is found in the cytoplasm. Its pathway is protein biosynthesis; polypeptide chain elongation. Its function is as follows. Involved in peptide bond synthesis. Stimulates efficient translation and peptide-bond synthesis on native or reconstituted 70S ribosomes in vitro. Probably functions indirectly by altering the affinity of the ribosome for aminoacyl-tRNA, thus increasing their reactivity as acceptors for peptidyl transferase. In Paraburkholderia phymatum (strain DSM 17167 / CIP 108236 / LMG 21445 / STM815) (Burkholderia phymatum), this protein is Elongation factor P.